The following is a 1086-amino-acid chain: NAD(P) transhydrogenase, mitochondrial (1086 aa).

The transit peptide at 1–43 directs the protein to the mitochondrion; sequence MANLLKTVVTGCSCPLLSNLGSCKGLRVKKDFLRTFYTHQELW. Over 44 to 474 the chain is Mitochondrial matrix; that stretch reads CKAPVKPGIP…TITPFRKTMS (431 aa). At lysine 70 the chain carries N6-acetyllysine. At lysine 117 the chain carries N6-succinyllysine. An NAD(+)-binding site is contributed by 182 to 184; sequence RVT. An N6-succinyllysine modification is found at lysine 224. Residues valine 237, 257–259, and glycine 287 contribute to the NAD(+) site; that span reads DTR. An N6-succinyllysine modification is found at lysine 294. Glutamate 300 and leucine 319 together coordinate NAD(+). Residue lysine 331 is modified to N6-succinyllysine. Lysine 397 carries the N6-acetyllysine modification. The next 4 membrane-spanning stretches (helical) occupy residues 475-493, 501-521, 527-546, and 558-578; these read TASA…GIAA, MVTT…GVTP, LMSV…LALM, and GLAA…FLVT. Residues 579–595 are Mitochondrial matrix-facing; the sequence is QRMLDMFKRPTDPPEYN. Helical transmembrane passes span 596–616, 622–642, 646–666, 672–691, and 702–722; these read YLYL…LYSG, IMYL…STQG, LGNA…LGVL, LLAQ…LTIA, and LVAA…IAEY. Residues 723 to 739 are Cytoplasmic-facing; sequence IIEYPHFATDAAANLTK. Transmembrane regions (helical) follow at residues 740 to 760, 778 to 797, 801 to 819, 833 to 853, and 857 to 879; these read IVAY…LIAY, HLLN…PFMV, FTTG…AVMG, VVIT…GFLL, and LLTI…MCVA. Topologically, residues 880–1086 are mitochondrial matrix; the sequence is MNRSLANVIL…QAKVRESYQK (207 aa). Residues tyrosine 933, 965–970, 1007–1011, 1026–1027, 1042–1049, and 1068–1069 each bind NADP(+); these read VAGRMP, GANDT, GM, KRSLGVGY, and DA. The residue at position 1079 (lysine 1079) is an N6-succinyllysine.

The protein in the N-terminal section; belongs to the AlaDH/PNT family. This sequence in the C-terminal section; belongs to the PNT beta subunit family. In terms of assembly, homodimer. Widely expressed with expression most readily detectable in adrenal, heart, kidney, thyroid and adipose tissues.

It localises to the mitochondrion inner membrane. It catalyses the reaction NAD(+) + NADPH + H(+)(in) = NADH + NADP(+) + H(+)(out). Functionally, the transhydrogenation between NADH and NADP is coupled to respiration and ATP hydrolysis and functions as a proton pump across the membrane. May play a role in reactive oxygen species (ROS) detoxification in the adrenal gland. The protein is NAD(P) transhydrogenase, mitochondrial (NNT) of Homo sapiens (Human).